The chain runs to 333 residues: tRNA dimethylallyltransferase (333 aa).

16 to 23 (GPTASGKT) lines the ATP pocket. Substrate is bound at residue 18 to 23 (TASGKT). Interaction with substrate tRNA regions lie at residues 41–44 (DSAL), 165–169 (QRISR), and 253–258 (RCVGYR).

This sequence belongs to the IPP transferase family. As to quaternary structure, monomer. The cofactor is Mg(2+).

The catalysed reaction is adenosine(37) in tRNA + dimethylallyl diphosphate = N(6)-dimethylallyladenosine(37) in tRNA + diphosphate. Catalyzes the transfer of a dimethylallyl group onto the adenine at position 37 in tRNAs that read codons beginning with uridine, leading to the formation of N6-(dimethylallyl)adenosine (i(6)A). In Polaromonas sp. (strain JS666 / ATCC BAA-500), this protein is tRNA dimethylallyltransferase.